The chain runs to 637 residues: ATP-dependent zinc metalloprotease FtsH (637 aa).

Residues 1 to 6 are Cytoplasmic-facing; that stretch reads MNNQGR. The chain crosses the membrane as a helical span at residues 7 to 27; sequence SILAWAALFIFVILLFNVFQS. Over 28-103 the chain is Periplasmic; that stretch reads DGLLGVRNNI…VVPLETRMNT (76 aa). A helical membrane pass occupies residues 104 to 124; that stretch reads FLGFLISWFPMLLLIGVWVFF. Topologically, residues 125–637 are cytoplasmic; sequence MRQMHGGGKA…TKDKKENIIS (513 aa). 195 to 202 contacts ATP; it reads GPPGTGKT. His-417 provides a ligand contact to Zn(2+). Glu-418 is an active-site residue. His-421 and Asp-495 together coordinate Zn(2+).

In the central section; belongs to the AAA ATPase family. This sequence in the C-terminal section; belongs to the peptidase M41 family. In terms of assembly, homohexamer. Requires Zn(2+) as cofactor.

It localises to the cell inner membrane. Its function is as follows. Acts as a processive, ATP-dependent zinc metallopeptidase for both cytoplasmic and membrane proteins. Plays a role in the quality control of integral membrane proteins. The protein is ATP-dependent zinc metalloprotease FtsH of Rickettsia prowazekii (strain Madrid E).